The primary structure comprises 453 residues: MIQTQSTAIKRRNSVHKNLFDPSLYQIPEPPRGGFQHQKKEYSKETFSNQVFGYDITSLKKRFTQLFPSNIQGYLPEVDLRITIICSIWYVTSSISSNLSKAILRTFNHPIALTELQFLVSAVLCVGFASIVNLFRLPRLKHTKFSKALNSFPDGILPEYLDGNFRSSILHKFLVPSKLVLMTTFPMGIFQFIGHITSHKAVSMIPVSLVHSVKALSPIITVGYYKFFEHRYYNSMTYYTLLLLIFGVMTTCWSTHGSKRASDNKSGSSLIGLLFAFISMIIFVAQNIFAKNILTIRRKVGILPSSSTDDVTSKEGQPSLDKTRFSPLQVDKITILFYCSCIGFSLTLLPFLTGELMHGGSVINDLTLETVALVAIHGIAHFFQAMLAFQLIGLLSSINYSVANIMKRIVVISVALFWETKLNFFQVFGVILTIAGLYGYDKWGLSKKDGRQA.

The Cytoplasmic segment spans residues 1-110 (MIQTQSTAIK…KAILRTFNHP (110 aa)). Residues 111-131 (IALTELQFLVSAVLCVGFASI) form a helical membrane-spanning segment. The Lumenal segment spans residues 132–172 (VNLFRLPRLKHTKFSKALNSFPDGILPEYLDGNFRSSILHK). A helical membrane pass occupies residues 173 to 193 (FLVPSKLVLMTTFPMGIFQFI). The Cytoplasmic segment spans residues 194 to 201 (GHITSHKA). A helical membrane pass occupies residues 202-222 (VSMIPVSLVHSVKALSPIITV). Over 223 to 234 (GYYKFFEHRYYN) the chain is Lumenal. Residues 235–255 (SMTYYTLLLLIFGVMTTCWST) form a helical membrane-spanning segment. Residues 256-269 (HGSKRASDNKSGSS) lie on the Cytoplasmic side of the membrane. A helical membrane pass occupies residues 270–290 (LIGLLFAFISMIIFVAQNIFA). Topologically, residues 291–332 (KNILTIRRKVGILPSSSTDDVTSKEGQPSLDKTRFSPLQVDK) are lumenal. A helical membrane pass occupies residues 333–353 (ITILFYCSCIGFSLTLLPFLT). The Cytoplasmic portion of the chain corresponds to 354–371 (GELMHGGSVINDLTLETV). A helical membrane pass occupies residues 372-392 (ALVAIHGIAHFFQAMLAFQLI). Over 393–413 (GLLSSINYSVANIMKRIVVIS) the chain is Lumenal. A helical membrane pass occupies residues 414 to 434 (VALFWETKLNFFQVFGVILTI). Residues 435–453 (AGLYGYDKWGLSKKDGRQA) lie on the Cytoplasmic side of the membrane.

Belongs to the TPT transporter family.

The protein resides in the membrane. Able to suppress the functional loss of YPT1. May form a channel. Protein SLY41 is not essential for cell viability. The SLY41 gene is a multicopy suppressor. This is an uncharacterized protein from Saccharomyces cerevisiae (strain ATCC 204508 / S288c) (Baker's yeast).